The primary structure comprises 401 residues: Beta-ketoadipyl-CoA thiolase (401 aa).

Cysteine 91 functions as the Acyl-thioester intermediate in the catalytic mechanism. Active-site proton acceptor residues include histidine 357 and cysteine 387.

It belongs to the thiolase-like superfamily. Thiolase family. Homotetramer.

The enzyme catalyses succinyl-CoA + acetyl-CoA = 3-oxoadipyl-CoA + CoA. It functions in the pathway aromatic compound metabolism; beta-ketoadipate pathway; acetyl-CoA and succinyl-CoA from 3-oxoadipate: step 2/2. Its function is as follows. Catalyzes thiolytic cleavage of beta-ketoadipyl-CoA to succinyl-CoA and acetyl-CoA. This Pseudomonas knackmussii (strain DSM 6978 / CCUG 54928 / LMG 23759 / B13) protein is Beta-ketoadipyl-CoA thiolase (pcaF).